We begin with the raw amino-acid sequence, 310 residues long: ADP-L-glycero-D-manno-heptose-6-epimerase (310 aa).

NADP(+) contacts are provided by residues 10-11 (FI), 31-32 (DN), lysine 38, lysine 53, 75-79 (EGACS), and asparagine 92. The Proton acceptor role is filled by tyrosine 140. Residue lysine 144 coordinates NADP(+). Asparagine 169 is a substrate binding site. Residues valine 170 and lysine 178 each contribute to the NADP(+) site. The Proton acceptor role is filled by lysine 178. Substrate-binding positions include serine 180, histidine 187, 201-204 (FEGS), arginine 209, and tyrosine 272.

This sequence belongs to the NAD(P)-dependent epimerase/dehydratase family. HldD subfamily. As to quaternary structure, homopentamer. The cofactor is NADP(+).

It carries out the reaction ADP-D-glycero-beta-D-manno-heptose = ADP-L-glycero-beta-D-manno-heptose. Its pathway is nucleotide-sugar biosynthesis; ADP-L-glycero-beta-D-manno-heptose biosynthesis; ADP-L-glycero-beta-D-manno-heptose from D-glycero-beta-D-manno-heptose 7-phosphate: step 4/4. In terms of biological role, catalyzes the interconversion between ADP-D-glycero-beta-D-manno-heptose and ADP-L-glycero-beta-D-manno-heptose via an epimerization at carbon 6 of the heptose. This is ADP-L-glycero-D-manno-heptose-6-epimerase from Klebsiella pneumoniae (strain 342).